A 286-amino-acid polypeptide reads, in one-letter code: MATEQIYKQFTSRTLLNFFEVAALTDGETNESVAAVCKIAAKDPAIVGVSVRPAFVRFIRQELVKSAPEVAGIKVCAAVNFPEGTGTPDTVSLEAVGALKDGADEIECLIDWRRMNENVADGESRIRLLVSEVKKVVGPKTLKVVLSGGELQGGDIISRAAVAALEGGADFLQTSSGLGATHATMFTVHLISIALREYMVRENERIRVEGINREGAAVRCIGIKIEVGDVHMAETADFLMQMIFENGPRSIVRDKFRVGGGFNLLKELRDCYESWDSVGVSPDTSP.

In terms of assembly, homodimer. Interacts with ADF; the interaction enhances ADF activity in disassembly of filamentous actin and inhibition of actin polymerization.

The protein resides in the cytoplasm. Its function is as follows. Involved in regulation of actin dynamics. The chain is Divergent deoxyribose-phosphate aldolase-like protein from Toxoplasma gondii.